Reading from the N-terminus, the 227-residue chain is Probable minor pilin MMP0600 (227 aa).

Positions 1 to 7 are excised as a propeptide; the sequence is MAKFSKG. The QXSXEXXXL motif lies at 8 to 16; that stretch reads QISIELILL.

The N-terminus is probably cleaved by the prepilin peptidase EppA, which recognizes the class III signal sequence.

It localises to the secreted. It is found in the cell surface. Its subcellular location is the fimbrium. The protein is Probable minor pilin MMP0600 of Methanococcus maripaludis (strain DSM 14266 / JCM 13030 / NBRC 101832 / S2 / LL).